A 548-amino-acid polypeptide reads, in one-letter code: Peptidyl-prolyl isomerase CWC27 (548 aa).

The PPIase cyclophilin-type domain maps to 11–193 (PTASVIIHTT…YPVKIERIEI (183 aa)). Disordered regions lie at residues 204-436 (RSRV…GDEE) and 504-548 (TLKD…RGAK). Composition is skewed to basic and acidic residues over residues 328–340 (EAPRKTALERANE), 353–366 (IHSEEPVKEKKKSA), 406–428 (RLEKAPPEKENEPAARETTKDGE), and 504–516 (TLKDEKKAARDAR).

Belongs to the cyclophilin-type PPIase family. CWC27 subfamily. In terms of assembly, associated with the spliceosome.

It is found in the cytoplasm. The protein resides in the nucleus. It carries out the reaction [protein]-peptidylproline (omega=180) = [protein]-peptidylproline (omega=0). Its function is as follows. PPIases accelerate the folding of proteins. It catalyzes the cis-trans isomerization of proline imidic peptide bonds in oligopeptides. Involved in pre-mRNA splicing. The protein is Peptidyl-prolyl isomerase CWC27 (CWC27) of Gibberella zeae (strain ATCC MYA-4620 / CBS 123657 / FGSC 9075 / NRRL 31084 / PH-1) (Wheat head blight fungus).